Here is a 198-residue protein sequence, read N- to C-terminus: Recombination protein RecR (198 aa).

The C4-type zinc-finger motif lies at 57 to 72 (CSVCGHITDRDPCYIC). Residues 80–175 (SVVCVVQEPK…KVTRIAHGLP (96 aa)) enclose the Toprim domain.

It belongs to the RecR family.

Its function is as follows. May play a role in DNA repair. It seems to be involved in an RecBC-independent recombinational process of DNA repair. It may act with RecF and RecO. The chain is Recombination protein RecR from Bacillus mycoides (strain KBAB4) (Bacillus weihenstephanensis).